The sequence spans 525 residues: Plant UBX domain-containing protein 13 (525 aa).

The UBA-like domain occupies 2-44 (ATPTQEAIDTFMTITGSSNAVAVRKLEEYRGNLNRAVNAYFTH). 3 disordered regions span residues 67-96 (RTTDPFPLRDPNFGRSLFDNDPVMSRPPFV), 150-172 (DDDNQSAPTGQSRHAVPVGSAEN), and 194-328 (METG…EEHD). A compositionally biased stretch (basic and acidic residues) spans 209-229 (AEREVLRSEGWKASSSEREAS). The segment covering 254 to 274 (SEDDDDDDDDDPDYVEEEEEP) has biased composition (acidic residues). The residue at position 362 (serine 362) is a Phosphoserine. The stretch at 380 to 436 (LASLEADRVKAEARRLEEEAARVEAIEEAKRKEEEARRKVEEEQELERQLVSKEASL) forms a coiled coil. The span at 408–430 (AKRKEEEARRKVEEEQELERQLV) shows a compositional bias: basic and acidic residues. Positions 408–446 (AKRKEEEARRKVEEEQELERQLVSKEASLPQEPPAGEEN) are disordered. Positions 443–521 (GEENAITLQV…GLTSKQEALF (79 aa)) constitute a UBX domain.

This chain is Plant UBX domain-containing protein 13, found in Arabidopsis thaliana (Mouse-ear cress).